A 428-amino-acid polypeptide reads, in one-letter code: U2 small nuclear ribonucleoprotein auxiliary factor 35 kDa subunit-related protein 2-like (428 aa).

The tract at residues 1–51 (MASRQTAIPEKLSRKQYKAAMKKEKRKKRRQKMARLRALEAPPEEDDDVSA) is disordered. The span at 23–35 (KEKRKKRRQKMAR) shows a compositional bias: basic residues. Residues 42–51 (PPEEDDDVSA) are compositionally biased toward acidic residues. At Ser-50 the chain carries Phosphoserine. The segment at 157 to 185 (EKYRPSCPFYNKTGACRFGNRCSRKHDFP) adopts a C3H1-type 1 zinc-finger fold. The region spanning 189–295 (PTLLVKSMFT…RQLQCEFCPV (107 aa)) is the RRM domain. A C3H1-type 2 zinc finger spans residues 297–324 (RWKVAICGLFEMQKCPKGKHCNFLHVFR). The interval 339–428 (MSPPAWTGSS…PGPQSQSHRT (90 aa)) is disordered. Ser-340 is subject to Phosphoserine. Residues 351 to 366 (NSDRRERKDHHEEYYS) show a composition bias toward basic and acidic residues. Residues 367–377 (KSRSYHSGSYH) are compositionally biased toward low complexity. Ser-375 is subject to Phosphoserine. Residues 389 to 410 (SPHRWKKSHKQTTKSHERHSSR) are compositionally biased toward basic residues. Residues 419–428 (PGPQSQSHRT) are compositionally biased toward polar residues.

In terms of assembly, interacts with SF3B1. Interacts with ZCRB1. As to expression, highest expression levels are detected in the brain, and lower expression levels in other tissues like epididymis, testis, bone marrow or muscle. In testis, expressed in both Sertoli and spermatogenic cell.

The protein resides in the nucleus. Functionally, plays a role in splicing of the U12-type introns. Implicated also in removal of U2 introns positioned adjacent to a U12 intron. In Mus musculus (Mouse), this protein is U2 small nuclear ribonucleoprotein auxiliary factor 35 kDa subunit-related protein 2-like.